The primary structure comprises 367 residues: Putative ionic transporter y4hA (367 aa).

The next 11 membrane-spanning stretches (helical) occupy residues 12–32, 39–59, 74–94, 108–128, 143–163, 172–192, 221–241, 249–269, 291–311, 318–338, and 347–367; these read VPLW…MTLA, SVVL…ASVH, AILL…SLML, VFAA…VLGG, AALA…NFVT, AIQL…FLFV, LAAG…AMLL, VEAL…VVLL, VLGS…AISV, ALGL…VGTI, and VLQG…SAIP.

Belongs to the Ca(2+):cation antiporter (CaCA) (TC 2.A.19) family.

Its subcellular location is the cell membrane. In terms of biological role, possible cation transporter. The protein is Putative ionic transporter y4hA of Sinorhizobium fredii (strain NBRC 101917 / NGR234).